A 276-amino-acid polypeptide reads, in one-letter code: 2-dehydro-3-deoxyphosphooctonate aldolase (276 aa).

The protein belongs to the KdsA family.

It localises to the cytoplasm. It carries out the reaction D-arabinose 5-phosphate + phosphoenolpyruvate + H2O = 3-deoxy-alpha-D-manno-2-octulosonate-8-phosphate + phosphate. The protein operates within carbohydrate biosynthesis; 3-deoxy-D-manno-octulosonate biosynthesis; 3-deoxy-D-manno-octulosonate from D-ribulose 5-phosphate: step 2/3. Its pathway is bacterial outer membrane biogenesis; lipopolysaccharide biosynthesis. The sequence is that of 2-dehydro-3-deoxyphosphooctonate aldolase from Xanthomonas axonopodis pv. citri (strain 306).